A 451-amino-acid chain; its full sequence is Chromosomal replication initiator protein DnaA (451 aa).

The domain I, interacts with DnaA modulators stretch occupies residues 1–73; it reads MQDNLPQIWE…SNALKQTTSK (73 aa). The domain II stretch occupies residues 73–113; sequence KNFEIRFIVPSEEKISKTEESQKKLEGSVNISVASDQFVSN. Residues 114–330 are domain III, AAA+ region; it reads NLNPKYTFDT…GALIRIVAYS (217 aa). Positions 158, 160, 161, and 162 each coordinate ATP. The interval 331 to 451 is domain IV, binds dsDNA; the sequence is SLTNSEITVE…ERIAKEIKGD (121 aa).

This sequence belongs to the DnaA family. As to quaternary structure, oligomerizes as a right-handed, spiral filament on DNA at oriC.

It localises to the cytoplasm. Plays an essential role in the initiation and regulation of chromosomal replication. ATP-DnaA binds to the origin of replication (oriC) to initiate formation of the DNA replication initiation complex once per cell cycle. Binds the DnaA box (a 9 base pair repeat at the origin) and separates the double-stranded (ds)DNA. Forms a right-handed helical filament on oriC DNA; dsDNA binds to the exterior of the filament while single-stranded (ss)DNA is stabiized in the filament's interior. The ATP-DnaA-oriC complex binds and stabilizes one strand of the AT-rich DNA unwinding element (DUE), permitting loading of DNA polymerase. After initiation quickly degrades to an ADP-DnaA complex that is not apt for DNA replication. Binds acidic phospholipids. In Alkaliphilus oremlandii (strain OhILAs) (Clostridium oremlandii (strain OhILAs)), this protein is Chromosomal replication initiator protein DnaA.